Consider the following 68-residue polypeptide: Large ribosomal subunit protein bL33c (68 aa).

It belongs to the bacterial ribosomal protein bL33 family.

The protein resides in the plastid. It localises to the chloroplast. The sequence is that of Large ribosomal subunit protein bL33c from Amborella trichopoda.